Reading from the N-terminus, the 596-residue chain is MGKKHKKHKAEWRSSYEDYTDTPLEKPLKLVLKVGGSEVTELSGSGHDSSYYDDRSDHERERHREKKKKKKKKSEKEKHLDEEERRKRKEEKKRKREKEHCDSEGEADAFDPGKKVEVEPPPDRPVRACRTQPAENESTPIQRLLEHFLRQLQRKDPHGFFAFPVTDAIAPGYSMIIKHPMDFGTMKDKIVANEYKSVTEFKADFKLMCDNAMTYNRPDTVYYKLAKKILHAGFKMMSKAALLGSEDPAAEEPVPEVVPVQVETTKKSKKPSREVISCMFEPEGNACSLTDSTAEEHVLALVEHAADEARDRINRFLPGGKMGYLKKLGDGSLLYSVVNAPEPDADEEETHPVDLSSLSSKLLPGFTTLGFKDERRNKVTFLSSASTALSMQNNSVFGDLKSDEMELLYSAYGDETGVQCALSLQEFVKDAGSYSKKMVDDLLDQITGGDHSRMIFQLKQRRSIPMRPADEMKVGDPLGESGGPVLDFMSMKQYPDVSLDVSMLSSLGKVKKELDHEDSHLNLDETARLLQDLHEAQAERGGSRPSSNLSSLSTASEREHPPPGSPSRLSVGEQPDVAHDPYEFLQSPEPAAPAKN.

Over residues methionine 1 to alanine 10 the composition is skewed to basic residues. 2 disordered regions span residues methionine 1–lysine 26 and glutamate 38–glutamate 137. Over residues serine 50–arginine 62 the composition is skewed to basic and acidic residues. Residue serine 56 is modified to Phosphoserine. Residues histidine 63–lysine 73 are compositionally biased toward basic residues. Residues serine 74–arginine 85 are compositionally biased toward basic and acidic residues. A compositionally biased stretch (basic residues) spans arginine 86–glutamate 97. Over residues aspartate 111 to valine 126 the composition is skewed to basic and acidic residues. Residues asparagine 136–alanine 240 form the Bromo domain. The histone H4K5ac H4K8ac and histone H4K5bu H4K8bu binding stretch occupies residues threonine 214–asparagine 216. Lysine 372 carries the N6-acetyllysine; alternate modification. Lysine 372 is covalently cross-linked (Glycyl lysine isopeptide (Lys-Gly) (interchain with G-Cter in SUMO2); alternate). Positions alanine 536–asparagine 596 are disordered. The segment covering serine 543–alanine 555 has biased composition (low complexity). 2 positions are modified to phosphoserine: serine 565 and serine 587.

In terms of assembly, binds acetylated histones H3 and H4. Binds butyrylated histone H4. Component of the multiprotein chromatin-remodeling subcomplex SWI/SNF called GBAF, which includes at least BICRA or BICRAL (mutually exclusive), BRD9, SS18, the core BAF subunits, SMARCA2/BRM, SMARCA4/BRG1/BAF190A, ACTL6A/BAF53, SMARCC1/BAF155, and SMARCD1/BAF60A. Interacts (via N-terminal bromodomain) with acetylated RAD54. Interacts (via C-terminus) with RAD51.

The protein localises to the nucleus. Functionally, plays a role in chromatin remodeling and regulation of transcription. Acts as a chromatin reader that recognizes and binds acylated histones: binds histones that are acetylated and/or butyrylated. Component of SWI/SNF chromatin remodeling subcomplex GBAF that carries out key enzymatic activities, changing chromatin structure by altering DNA-histone contacts within a nucleosome in an ATP-dependent manner. Also orchestrates the RAD51-RAD54 complex formation and thereby plays a role in homologous recombination (HR). The polypeptide is Bromodomain-containing protein 9 (Brd9) (Mus musculus (Mouse)).